A 456-amino-acid polypeptide reads, in one-letter code: MNTVRETIAAIATAQGRGGVGIVRLSGPLASQAGQAITGRTLTPRHAHYGPFRDADGLVLDEGIALFFPGPNSFTGEDVLELQGHGGPVVMDMLLQRCLQLGCRLARPGEFSERAFLNDKLDLAQAEAIADLIEASSTQAARNALRSLQGAFSKRVHGLTEALIALRIYVEAAIDFPEEEIDFLADGHVLRMLDDVRSELSTVQREAGQGALLRDGMTVVIAGRPNAGKSSLLNQLAGREAAIVTDIAGTTRDVLREHIHIDGMPLHVVDTAGLRDTDDHVEKIGVERALKAIGEADRVLLVVDSTAPEASDPFALWPEFLDQRPDVAKVTLIRNKADLSGEHVGMEQSDDGHVTITLSAREDDMGLDLLRDHLKACMGYEQTAESSFSARRRHLEALRQASAHLEHGRAQLTLAGAGELLAEDLRQAQQALGEITGAFSSDDLLGRIFSSFCIGK.

3 residues coordinate (6S)-5-formyl-5,6,7,8-tetrahydrofolate: arginine 24, glutamate 81, and lysine 120. A TrmE-type G domain is found at 216–379 (GMTVVIAGRP…LRDHLKACMG (164 aa)). Asparagine 226 is a binding site for K(+). Residues 226–231 (NAGKSS), 245–251 (TDIAGTT), 270–273 (DTAG), 335–338 (NKAD), and 359–361 (SAR) contribute to the GTP site. Serine 230 serves as a coordination point for Mg(2+). K(+) contacts are provided by threonine 245, isoleucine 247, and threonine 250. Residue threonine 251 participates in Mg(2+) binding. Lysine 456 lines the (6S)-5-formyl-5,6,7,8-tetrahydrofolate pocket.

The protein belongs to the TRAFAC class TrmE-Era-EngA-EngB-Septin-like GTPase superfamily. TrmE GTPase family. In terms of assembly, homodimer. Heterotetramer of two MnmE and two MnmG subunits. K(+) is required as a cofactor.

The protein resides in the cytoplasm. Functionally, exhibits a very high intrinsic GTPase hydrolysis rate. Involved in the addition of a carboxymethylaminomethyl (cmnm) group at the wobble position (U34) of certain tRNAs, forming tRNA-cmnm(5)s(2)U34. In Pseudomonas entomophila (strain L48), this protein is tRNA modification GTPase MnmE.